We begin with the raw amino-acid sequence, 2150 residues long: Genome polyprotein (2150 aa).

Gly2 carries N-myristoyl glycine; by host lipidation. Topologically, residues 2–1463 (GAQVSRQNVG…ELNLANTIIT (1462 aa)) are cytoplasmic. The segment at 565 to 581 (IAQNPVENYIDEVLNEV) is amphipathic alpha-helix. A disordered region spans residues 592 to 611 (PTTSNSAPALDAAETGHTSS). Residues His868 and Asp885 each act as for protease 2A activity in the active site. Residues Cys902 and Cys904 each contribute to the Zn(2+) site. The For protease 2A activity role is filled by Cys956. Zn(2+) is bound by residues Cys962 and His964. The segment at 1088-1157 (SDSWLKKFTE…SLRVADMKTQ (70 aa)) is membrane-binding. Residues 1088–1221 (SDSWLKKFTE…PPGAGKSITT (134 aa)) form an oligomerization region. The RNA-binding stretch occupies residues 1109 to 1113 (GNKIS). One can recognise an SF3 helicase domain in the interval 1181 to 1343 (EAKRIKTLYI…FKDPQGKLNV (163 aa)). Cys1350, Cys1361, and Cys1366 together coordinate Zn(2+). Residues 1350–1366 (CDVDNRIGNARCCPFVC) form a C4-type; degenerate zinc finger. Positions 1393-1400 (EDRRRRQV) are RNA-binding. The interval 1404–1409 (MTAIFQ) is oligomerization. An intramembrane segment occupies 1464–1479 (IIANVIGMARIIYVIY). Residues 1480 to 2150 (KLFCTLQGPY…LLLHEWYEKF (671 aa)) are Cytoplasmic-facing. Tyr1489 carries the post-translational modification O-(5'-phospho-RNA)-tyrosine. The region spanning 1508–1686 (GPEEEFGMSL…FSAMLLRSYF (179 aa)) is the Peptidase C3 domain. Active-site for protease 3C activity residues include His1547, Glu1578, and Cys1654. Residues 1918–2031 (KCIMAFDYTN…SYIHELDMEA (114 aa)) form the RdRp catalytic domain. Mg(2+) is bound by residues Asp1924 and Asp2017.

It belongs to the picornaviruses polyprotein family. In terms of assembly, interacts with capsid protein VP1 and capsid protein VP3 to form heterotrimeric protomers. Interacts with capsid protein VP0, and capsid protein VP3 to form heterotrimeric protomers. Five protomers subsequently associate to form pentamers which serve as building blocks for the capsid. Interacts with capsid protein VP2, capsid protein VP3 and capsid protein VP4 following cleavage of capsid protein VP0. As to quaternary structure, interacts with capsid protein VP1 and capsid protein VP3 in the mature capsid. In terms of assembly, interacts with capsid protein VP0 and capsid protein VP1 to form heterotrimeric protomers. Five protomers subsequently associate to form pentamers which serve as building blocks for the capsid. Interacts with capsid protein VP4 in the mature capsid. Interacts with protein 2C; this interaction may be important for virion morphogenesis. Interacts with capsid protein VP1 and capsid protein VP3. As to quaternary structure, homodimer. In terms of assembly, homohexamer; forms a hexameric ring structure with 6-fold symmetry characteristic of AAA+ ATPases. Interacts (via N-terminus) with host RTN3 (via reticulon domain); this interaction is important for viral replication. Interacts with capsid protein VP3; this interaction may be important for virion morphogenesis. Interacts with protein 3CD. As to quaternary structure, homodimer. Interacts with host GBF1. Interacts (via GOLD domain) with host ACBD3 (via GOLD domain); this interaction allows the formation of a viral protein 3A/ACBD3 heterotetramer with a 2:2 stoichiometry, which will stimulate the recruitment of host PI4KB in order to synthesize PI4P at the viral RNA replication sites. In terms of assembly, interacts with RNA-directed RNA polymerase. Interacts with protein 3AB and with RNA-directed RNA polymerase. As to quaternary structure, interacts with Viral protein genome-linked and with protein 3CD. The cofactor is Mg(2+). Specific enzymatic cleavages in vivo by the viral proteases yield processing intermediates and the mature proteins. In terms of processing, myristoylation is required for the formation of pentamers during virus assembly. Further assembly of 12 pentamers and a molecule of genomic RNA generates the provirion. Post-translationally, during virion maturation, immature virions are rendered infectious following cleavage of VP0 into VP4 and VP2. This maturation seems to be an autocatalytic event triggered by the presence of RNA in the capsid and it is followed by a conformational change infectious virion. Myristoylation is required during RNA encapsidation and formation of the mature virus particle. In terms of processing, VPg is uridylylated by the polymerase into VPg-pUpU. This acts as a nucleotide-peptide primer for the genomic RNA replication.

The protein resides in the virion. It is found in the host cytoplasm. It localises to the host cytoplasmic vesicle membrane. The protein localises to the host nucleus. It catalyses the reaction a ribonucleoside 5'-triphosphate + H2O = a ribonucleoside 5'-diphosphate + phosphate + H(+). It carries out the reaction Selective cleavage of Tyr-|-Gly bond in the picornavirus polyprotein.. The catalysed reaction is RNA(n) + a ribonucleoside 5'-triphosphate = RNA(n+1) + diphosphate. The enzyme catalyses Selective cleavage of Gln-|-Gly bond in the poliovirus polyprotein. In other picornavirus reactions Glu may be substituted for Gln, and Ser or Thr for Gly.. Replication or transcription is subject to high level of random mutations by the nucleotide analog ribavirin. Its function is as follows. Forms an icosahedral capsid of pseudo T=3 symmetry with capsid proteins VP2 and VP3. The capsid is 300 Angstroms in diameter, composed of 60 copies of each capsid protein and enclosing the viral positive strand RNA genome. Capsid protein VP1 mainly forms the vertices of the capsid. Capsid protein VP1 interacts with host cell receptor to provide virion attachment to target host cells. This attachment induces virion internalization. Tyrosine kinases are probably involved in the entry process. After binding to its receptor, the capsid undergoes conformational changes. Capsid protein VP1 N-terminus (that contains an amphipathic alpha-helix) and capsid protein VP4 are externalized. Together, they shape a pore in the host membrane through which viral genome is translocated to host cell cytoplasm. In terms of biological role, forms an icosahedral capsid of pseudo T=3 symmetry with capsid proteins VP2 and VP3. The capsid is 300 Angstroms in diameter, composed of 60 copies of each capsid protein and enclosing the viral positive strand RNA genome. Lies on the inner surface of the capsid shell. After binding to the host receptor, the capsid undergoes conformational changes. Capsid protein VP4 is released, Capsid protein VP1 N-terminus is externalized, and together, they shape a pore in the host membrane through which the viral genome is translocated into the host cell cytoplasm. Functionally, component of immature procapsids, which is cleaved into capsid proteins VP4 and VP2 after maturation. Allows the capsid to remain inactive before the maturation step. Its function is as follows. Cysteine protease that cleaves viral polyprotein and specific host proteins. It is responsible for the autocatalytic cleavage between the P1 and P2 regions, which is the first cleavage occurring in the polyprotein. Also cleaves the host translation initiation factor EIF4G1, in order to shut down the capped cellular mRNA translation. Inhibits the host nucleus-cytoplasm protein and RNA trafficking by cleaving host members of the nuclear pores. Counteracts stress granule formation probably by antagonizing its assembly or promoting its dissassembly. In terms of biological role, plays an essential role in the virus replication cycle by acting as a viroporin. Creates a pore in the host endoplasmic reticulum and as a consequence releases Ca2+ in the cytoplasm of infected cell. In turn, high levels of cytoplasmic calcium may trigger membrane trafficking and transport of viral ER-associated proteins to viroplasms, sites of viral genome replication. Induces and associates with structural rearrangements of intracellular membranes. Displays RNA-binding, nucleotide binding and NTPase activities. May play a role in virion morphogenesis and viral RNA encapsidation by interacting with the capsid protein VP3. Functionally, localizes the viral replication complex to the surface of membranous vesicles. Together with protein 3CD binds the Cis-Active RNA Element (CRE) which is involved in RNA synthesis initiation. Acts as a cofactor to stimulate the activity of 3D polymerase, maybe through a nucleid acid chaperone activity. Its function is as follows. Localizes the viral replication complex to the surface of membranous vesicles. It inhibits host cell endoplasmic reticulum-to-Golgi apparatus transport and causes the disassembly of the Golgi complex, possibly through GBF1 interaction. This would result in depletion of MHC, trail receptors and IFN receptors at the host cell surface. Plays an essential role in viral RNA replication by recruiting ACBD3 and PI4KB at the viral replication sites, thereby allowing the formation of the rearranged membranous structures where viral replication takes place. In terms of biological role, acts as a primer for viral RNA replication and remains covalently bound to viral genomic RNA. VPg is uridylylated prior to priming replication into VPg-pUpU. The oriI viral genomic sequence may act as a template for this. The VPg-pUpU is then used as primer on the genomic RNA poly(A) by the RNA-dependent RNA polymerase to replicate the viral genome. During genome replication, the VPg-RNA linkage is removed by the host TDP2, thereby accelerating replication. During the late stage of the replication cycle, host TDP2 is excluded from sites of viral RNA synthesis and encapsidation, allowing for the generation of progeny virions. Involved in the viral replication complex and viral polypeptide maturation. It exhibits protease activity with a specificity and catalytic efficiency that is different from protease 3C. Protein 3CD lacks polymerase activity. Protein 3CD binds to the 5'UTR of the viral genome. Functionally, replicates the viral genomic RNA on the surface of intracellular membranes. May form linear arrays of subunits that propagate along a strong head-to-tail interaction called interface-I. Covalently attaches UMP to a tyrosine of VPg, which is used to prime RNA synthesis. The positive stranded RNA genome is first replicated at virus induced membranous vesicles, creating a dsRNA genomic replication form. This dsRNA is then used as template to synthesize positive stranded RNA genomes. ss(+)RNA genomes are either translated, replicated or encapsidated. Its function is as follows. Major viral protease that mediates proteolytic processing of the polyprotein. Cleaves host EIF5B, contributing to host translation shutoff. Also cleaves host PABPC1, contributing to host translation shutoff. Cleaves host NLRP1, triggers host N-glycine-mediated degradation of the autoinhibitory NLRP1 N-terminal fragment. The polypeptide is Genome polyprotein (Homo sapiens (Human)).